The following is a 764-amino-acid chain: 5-methyltetrahydropteroyltriglutamate--homocysteine methyltransferase (764 aa).

5-methyltetrahydropteroyltri-L-glutamate contacts are provided by residues 17 to 20 (RELK) and K117. L-homocysteine-binding positions include 437–439 (IGS) and E490. L-methionine is bound by residues 437–439 (IGS) and E490. Residues 521 to 522 (RC) and W567 each bind 5-methyltetrahydropteroyltri-L-glutamate. D605 is a binding site for L-homocysteine. L-methionine is bound at residue D605. 5-methyltetrahydropteroyltri-L-glutamate is bound at residue E611. H647, C649, and E671 together coordinate Zn(2+). H701 (proton donor) is an active-site residue. C733 is a binding site for Zn(2+).

This sequence belongs to the vitamin-B12 independent methionine synthase family. The cofactor is Zn(2+).

The catalysed reaction is 5-methyltetrahydropteroyltri-L-glutamate + L-homocysteine = tetrahydropteroyltri-L-glutamate + L-methionine. The protein operates within amino-acid biosynthesis; L-methionine biosynthesis via de novo pathway; L-methionine from L-homocysteine (MetE route): step 1/1. In terms of biological role, catalyzes the transfer of a methyl group from 5-methyltetrahydrofolate to homocysteine resulting in methionine formation. In Blochmanniella pennsylvanica (strain BPEN), this protein is 5-methyltetrahydropteroyltriglutamate--homocysteine methyltransferase.